The chain runs to 207 residues: Interleukin-6 (207 aa).

The signal sequence occupies residues methionine 1–alanine 18. A disordered region spans residues arginine 26 to arginine 47. A compositionally biased stretch (polar residues) spans asparagine 31 to glycine 44. Cysteine 65 and cysteine 71 are joined by a disulfide. Phosphoserine is present on serine 74. Residues cysteine 94 and cysteine 104 are joined by a disulfide bond.

The protein belongs to the IL-6 superfamily. Component of a hexamer of two molecules each of IL6, IL6R and IL6ST; first binds to IL6R to associate with the signaling subunit IL6ST. Interacts with IL6R (via the N-terminal ectodomain); this interaction may be affected by IL6R-binding with SORL1, hence decreasing IL6 cis signaling. Interacts with SORL1 (via the N-terminal ectodomain); this interaction leads to IL6 internalization and lysosomal degradation. May form a trimeric complex with the soluble SORL1 ectodomain and soluble IL6R receptor; this interaction might stabilize circulating IL6, hence promoting IL6 trans signaling.

The protein localises to the secreted. Functionally, cytokine with a wide variety of biological functions in immunity, tissue regeneration, and metabolism. Binds to IL6R, then the complex associates to the signaling subunit IL6ST/gp130 to trigger the intracellular IL6-signaling pathway. The interaction with the membrane-bound IL6R and IL6ST stimulates 'classic signaling', whereas the binding of IL6 and soluble IL6R to IL6ST stimulates 'trans-signaling'. Alternatively, 'cluster signaling' occurs when membrane-bound IL6:IL6R complexes on transmitter cells activate IL6ST receptors on neighboring receiver cells. Its function is as follows. IL6 is a potent inducer of the acute phase response. Rapid production of IL6 contributes to host defense during infection and tissue injury, but excessive IL6 synthesis is involved in disease pathology. In the innate immune response, is synthesized by myeloid cells, such as macrophages and dendritic cells, upon recognition of pathogens through toll-like receptors (TLRs) at the site of infection or tissue injury. In the adaptive immune response, is required for the differentiation of B cells into immunoglobulin-secreting cells. Plays a major role in the differentiation of CD4(+) T cell subsets. Essential factor for the development of T follicular helper (Tfh) cells that are required for the induction of germinal-center formation. Required to drive naive CD4(+) T cells to the Th17 lineage. Also required for proliferation of myeloma cells and the survival of plasmablast cells. Acts as an essential factor in bone homeostasis and on vessels directly or indirectly by induction of VEGF, resulting in increased angiogenesis activity and vascular permeability. Induces, through 'trans-signaling' and synergistically with IL1B and TNF, the production of VEGF. Involved in metabolic controls, is discharged into the bloodstream after muscle contraction increasing lipolysis and improving insulin resistance. 'Trans-signaling' in central nervous system also regulates energy and glucose homeostasis. Mediates, through GLP-1, crosstalk between insulin-sensitive tissues, intestinal L cells and pancreatic islets to adapt to changes in insulin demand. Also acts as a myokine. Plays a protective role during liver injury, being required for maintenance of tissue regeneration. Also has a pivotal role in iron metabolism by regulating HAMP/hepcidin expression upon inflammation or bacterial infection. Through activation of IL6ST-YAP-NOTCH pathway, induces inflammation-induced epithelial regeneration. This is Interleukin-6 (IL6) from Marmota monax (Woodchuck).